The sequence spans 624 residues: Double-stranded RNA-binding protein Staufen homolog 2 (624 aa).

5 DRBM domains span residues 55 to 122 (STSI…NGLA), 142 to 228 (QRAN…SEIS), 254 to 321 (MKSF…PEYG), 354 to 422 (RRRE…IADQ), and 540 to 604 (LTCL…EKAD). The segment at 197-223 (LRNEPIPERSSLNGEANRGPEEDKDAN) is disordered. The segment covering 214-223 (RGPEEDKDAN) has biased composition (basic and acidic residues). Disordered stretches follow at residues 401–428 (EKTG…TPKG) and 592–624 (PFEQ…KAVV). The span at 415–426 (QNSGIADQTSTP) shows a compositional bias: polar residues. Residues 596 to 605 (AKLRGEKADN) are compositionally biased toward basic and acidic residues.

Its function is as follows. RNA-binding protein required for the microtubule-dependent transport of RNAs within polarized cell types. This is Double-stranded RNA-binding protein Staufen homolog 2 (stau2) from Xenopus tropicalis (Western clawed frog).